The sequence spans 262 residues: Apolipoprotein A-I-1 (262 aa).

The N-terminal stretch at 1–18 (MKFLALALTILLAAGTQA) is a signal peptide. Positions 32-63 (VKAALSMYIAQVKLTAQRSIDLLDDTEYKEYK) are 3 X approximate tandem repeats. Tandem repeats lie at residues 64 to 85 (MQLT…QSLA) and 87 to 107 (YSEA…AEVM). Residues 64-262 (MQLTQSLDNL…YETISQAMKA (199 aa)) form a 10 X approximate tandem repeats region. A 3; half-length repeat occupies 108 to 118 (KDVEELRSQLE). 5 consecutive repeat copies span residues 119–140 (PKRA…KKLE), 141–162 (PLIK…AKME), 163–184 (PIVE…TKLM), 185–206 (PIVE…TLAA), and 207–228 (PYAE…EKVS). The 9; half-length repeat unit spans residues 229 to 239 (PLSEDFKGQVG). Repeat 10 spans residues 240 to 262 (PAAEQAKQKLLAFYETISQAMKA).

It belongs to the apolipoprotein A1/A4/E family.

It is found in the secreted. Participates in the reverse transport of cholesterol from tissues to the liver for excretion by promoting cholesterol efflux from tissues and by acting as a cofactor for the lecithin cholesterol acyltransferase (LCAT). In Oncorhynchus mykiss (Rainbow trout), this protein is Apolipoprotein A-I-1.